A 496-amino-acid chain; its full sequence is Adenosine transporter 1 (496 aa).

Over 1–26 the chain is Cytoplasmic; it reads MSSHTSTPNHASAAPPRKWYDMTSAE. Residues 27 to 47 form a helical membrane-spanning segment; that stretch reads FYVYVVAFMCGISMLMPINAV. Topologically, residues 48 to 77 are extracellular; sequence FSAPSYMLQYYLYATKDPNHVPQMTNFWSN. A helical transmembrane segment spans residues 78 to 98; it reads VMTYYNLIGLVTGLVMEPLTL. At 99 to 107 the chain is on the cytoplasmic side; that stretch reads LKSFRKIPM. The helical transmembrane segment at 108–128 threads the bilayer; the sequence is LVRLLGGLCILIVEIIVLMAV. Residues 129 to 135 are Extracellular-facing; it reads PARGTTE. A helical membrane pass occupies residues 136-156; the sequence is GGAVATMCIAGFIGGLGKSIF. The Cytoplasmic segment spans residues 157-172; the sequence is ESTVYGMFGAFPPSFT. A helical membrane pass occupies residues 173-193; that stretch reads SIMMGGVGISGVLTSLIQIIV. At 194–208 the chain is on the extracellular side; that stretch reads KAALPDTYEGVKKQS. Residues 209-229 traverse the membrane as a helical segment; that stretch reads YIYYSLDVGIQAATFIALIMM. Residues 230–336 are Cytoplasmic-facing; that stretch reads RFNSFAQLHF…SIISVLRSIK (107 aa). The helical transmembrane segment at 337–357 threads the bilayer; sequence WMFVSCAFVFVVTLFLFPGIA. Topologically, residues 358 to 365 are extracellular; sequence TGMFPESK. The chain crosses the membrane as a helical span at residues 366–386; that stretch reads WFATVAVFIFNCCDVLGRVAP. At 387 to 399 the chain is on the cytoplasmic side; sequence ALRFMWPRSYNQR. Residues 400–420 form a helical membrane-spanning segment; the sequence is WIIVAASFARVIFVPLLLLYS. Topologically, residues 421 to 431 are extracellular; it reads YHYIPSEAYGY. Residues 432 to 452 traverse the membrane as a helical segment; the sequence is VIMVIFGFSSGYVASMSLTLG. The Cytoplasmic portion of the chain corresponds to 453-464; it reads PQSKGIDNDGKR. A helical transmembrane segment spans residues 465 to 485; it reads FVAGTLMGISILVGGTIGTVL. Over 486–496 the chain is Extracellular; sequence SIMTQTIREKY.

It belongs to the SLC29A/ENT transporter (TC 2.A.57) family.

Its subcellular location is the membrane. The catalysed reaction is adenosine(in) = adenosine(out). In terms of biological role, adenosine transporter. The chain is Adenosine transporter 1 from Crithidia fasciculata.